We begin with the raw amino-acid sequence, 178 residues long: Large ribosomal subunit protein uL6 (178 aa).

It belongs to the universal ribosomal protein uL6 family. In terms of assembly, part of the 50S ribosomal subunit.

In terms of biological role, this protein binds to the 23S rRNA, and is important in its secondary structure. It is located near the subunit interface in the base of the L7/L12 stalk, and near the tRNA binding site of the peptidyltransferase center. In Frankia casuarinae (strain DSM 45818 / CECT 9043 / HFP020203 / CcI3), this protein is Large ribosomal subunit protein uL6.